Here is an 849-residue protein sequence, read N- to C-terminus: Dopamine receptor 2 (849 aa).

The Extracellular segment spans residues 1–39 (MEAGETWNVSLEWPPPSLDLSTITQTPSTIVGSGIPLNY). N-linked (GlcNAc...) asparagine glycosylation occurs at asparagine 8. The helical transmembrane segment at 40-60 (AGLSLIVIPLITLLGNLLVII) threads the bilayer. Residues 61 to 70 (SVLRYRALQS) are Cytoplasmic-facing. A helical membrane pass occupies residues 71-91 (AINFLILGLAVADLLVAIIVM). Over 92–112 (PYAVYVYVTNGDWYLGNLMCD) the chain is Extracellular. Cysteine 111 and cysteine 190 are disulfide-bonded. A helical membrane pass occupies residues 113–133 (IYMASDVCCSTASILLLAVIS). At 134 to 155 (FDRYRAVSLPIQYSRQSQNVKR) the chain is on the cytoplasmic side. A helical membrane pass occupies residues 156–176 (VWTLIAVIWLVSLTLASPMVF). The Extracellular portion of the chain corresponds to 177–203 (GVNVRPPDANPYECRFYNAEFSILSSM). The required for the interaction with gpa-14 stretch occupies residues 183 to 849 (PDANPYECRF…HHFSNKQAHV (667 aa)). A helical transmembrane segment spans residues 204–224 (ISFVIPCFLVLFVYIRIIIAL). The Cytoplasmic portion of the chain corresponds to 225 to 759 (KKREKAAKMR…QRKEKRATKT (535 aa)). Positions 450 to 515 (RRSSYADDSQ…NNSRTASITN (66 aa)) are disordered. Residues 457 to 470 (DSQPTSSQTSSGDG) show a composition bias toward low complexity. A compositionally biased stretch (basic residues) spans 477–498 (GQKRFRNLSRNYSTKHHRKVVK). The segment covering 501 to 515 (RGNSRNNSRTASITN) has biased composition (polar residues). The helical transmembrane segment at 760–780 (LGVVVGVFLVCWVPFFVINIL) threads the bilayer. Topologically, residues 781 to 798 (NAVCILLNKDSCQVGYDL) are extracellular. A helical transmembrane segment spans residues 799–819 (FFYCTWIGYMNSFMNPIIYTI). The Cytoplasmic portion of the chain corresponds to 820–849 (FNTEFRRAFKSIIFGRNSTRHHFSNKQAHV).

It belongs to the G-protein coupled receptor 1 family. Interacts (via C-terminus) with the G-alpha protein gpa-14; the interaction is direct. Expressed in all dopaminergic neurons. Expressed in neurons around the nerve ring and the posterior side of the body including PDE neurons. In hermaphrodites, expressed in the head and tail ganglia including in the RIA interneuron pair, and in a subset of sublateral interneurons and the PDA neuron in the tail. Expressed in cholinergic SIA neurons. Also expressed in the male tail. In males, expressed in the dorsal spicule protractor, ventral spicule protractor, dorsal spicule retractor and ventral spicule retractor muscles and the sensory post-cloacal sensilla B (PCB) neuron. In males, expressed in the sensory hook neurons HOA.

The protein localises to the cell membrane. In terms of biological role, G-protein coupled receptor which binds to the neurotransmitter dopamine with high affinity leading to the activation of an associated G-protein and downstream signaling pathways. Couples to G-proteins to inhibit adenylate cyclase (AC) activity and cAMP production. Inhibits synaptic vesicle fusion to negatively regulate the release of dopamine at dopaminergic neuron synapses. Antagonizes octopamine signaling in response to food by promoting the dopamine-mediated suppression of crh-1/CREB1 transcription factor activation in cholinergic SIA neurons. This is most likely in association with the G(o)-alpha G-protein subunit goa-1. In association with the G-alpha protein gpa-14, modulates two types of learning behavior: touch habituation and chemosensory associative conditioning. May act partly via tsp-17 to negatively regulate dopamine reuptake transporter dat-1 activity. Plays a role in behavioral plasticity and regulates the decision-making process when conflicting alternatives are present. Promotes male mating behavior by antagonizing acetylcholine signaling to control the protrusions of copulatory spicules from the tail of males during hermaphrodite vulval location. Modulates unc-7 activity at gap junctions to promote inhibitory neuronal signaling transduction between chemosensory and mechanosensory neurons, and thus ensures spicule insertion attempts are confined to the hermaphrodite vulva during copulation. Functionally, G-protein coupled receptor which binds to the neurotransmitter dopamine with high affinity leading to the activation of an associated G-protein and downstream signaling pathways. Couples to G-proteins to inhibit adenylate cyclase (AC) activity and cAMP production. The protein is Dopamine receptor 2 of Caenorhabditis elegans.